The chain runs to 911 residues: Ribonuclease J (911 aa).

A chloroplast-targeting transit peptide spans 1 to 70; it reads MMKPASLQGF…VTSAPASGTS (70 aa). A disordered region spans residues 58–90; the sequence is SCSVTSAPASGTSSSSKTPRRRSGRLEGVGKSM. A compositionally biased stretch (low complexity) spans 63-74; sequence SAPASGTSSSSK. The Zn(2+) site is built by His175, His177, Asp179, His180, His245, and Asp267. Residues 336–338 and 468–472 each bind substrate; these read ASN and HTSGH. His494 lines the Zn(2+) pocket. 2 disordered regions span residues 695–723 and 735–824; these read VEGN…TLED and EETA…WKPE. Basic and acidic residues-rich tracts occupy residues 713-722 and 783-795; these read SPKEVDRTLE and ADTE…KENS. Positions 796–806 are enriched in acidic residues; it reads RDDDELADASD. Positions 813–877 constitute a Myb-like domain; sequence PKRVRKNKWK…QCKSLWASLI (65 aa).

This sequence belongs to the metallo-beta-lactamase superfamily. RNA-metabolizing metallo-beta-lactamase-like family. Bacterial RNase J subfamily. As to quaternary structure, homodimer. May be a subunit of the RNA degradosome. The cofactor is Zn(2+). Moslty expressed in inflorescences, seedlings, leaves, flowers and flower buds, and, to a lower extent, in stems, siliques and roots.

The protein resides in the plastid. Its subcellular location is the chloroplast. In terms of biological role, essential protein required during embryogenesis, especially in initiating and maintaining the organization of shoot apical meristems (SAMs), cotyledons, and hypocotyls. Involved in auxin-mediated pathways during embryogenesis. RNase that has both endonuclease and 5'-3' exonuclease activities. Involved in RNA surveillance to prevent overaccumulation of antisense RNA. Probably involved in maturation of rRNA and in some organisms also mRNA maturation and/or decay. In Arabidopsis thaliana (Mouse-ear cress), this protein is Ribonuclease J.